Here is a 323-residue protein sequence, read N- to C-terminus: NADH-cytochrome b5 reductase 2 (323 aa).

A helical membrane pass occupies residues 32–48; the sequence is LAPIYLGVGLIGLGVGL. Residues 72–177 form the FAD-binding FR-type domain; that stretch reads QGWVDLKLAQ…KGPIPKYPWE (106 aa). Residue 180–215 participates in FAD binding; that stretch reads KHKHICLIAGGTGITPMYQLARKIFKDPEDQTKVTL.

The protein belongs to the flavoprotein pyridine nucleotide cytochrome reductase family. The cofactor is FAD.

Its subcellular location is the mitochondrion outer membrane. The catalysed reaction is 2 Fe(III)-[cytochrome b5] + NADH = 2 Fe(II)-[cytochrome b5] + NAD(+) + H(+). Its function is as follows. May mediate the reduction of outer membrane cytochrome b5. This Aspergillus fumigatus (strain ATCC MYA-4609 / CBS 101355 / FGSC A1100 / Af293) (Neosartorya fumigata) protein is NADH-cytochrome b5 reductase 2 (mcr1).